The chain runs to 254 residues: Small ribosomal subunit protein uS2 (254 aa).

Belongs to the universal ribosomal protein uS2 family.

The polypeptide is Small ribosomal subunit protein uS2 (Legionella pneumophila (strain Lens)).